The sequence spans 269 residues: Tryptophan synthase alpha chain (269 aa).

Active-site proton acceptor residues include Glu-49 and Asp-60.

This sequence belongs to the TrpA family. In terms of assembly, tetramer of two alpha and two beta chains.

The catalysed reaction is (1S,2R)-1-C-(indol-3-yl)glycerol 3-phosphate + L-serine = D-glyceraldehyde 3-phosphate + L-tryptophan + H2O. The protein operates within amino-acid biosynthesis; L-tryptophan biosynthesis; L-tryptophan from chorismate: step 5/5. Its function is as follows. The alpha subunit is responsible for the aldol cleavage of indoleglycerol phosphate to indole and glyceraldehyde 3-phosphate. The chain is Tryptophan synthase alpha chain from Cronobacter sakazakii (strain ATCC BAA-894) (Enterobacter sakazakii).